A 437-amino-acid chain; its full sequence is Triacylglycerol lipase (437 aa).

The region spanning 1 to 100 (MVSYVVALPE…AELANASLLQ (100 aa)) is the PE domain. The linker stretch occupies residues 101–206 (SEFASGIGNG…GNSPPPLLNS (106 aa)). The tract at residues 207–437 (LLGQTVQYTT…QINQQLGIAA (231 aa)) is lipase. Residues 239-241 (HGG) carry the Involved in the stabilization of the negatively charged intermediate by the formation of the oxyanion hole motif. Catalysis depends on residues Ser-309, Asp-383, and His-413.

In the N-terminal section; belongs to the mycobacterial PE family. PGRS subfamily. It in the C-terminal section; belongs to the 'GDXG' lipolytic enzyme family. As to quaternary structure, forms aggregates via its PE domain. In terms of processing, upon export, the PE domain is removed by proteolytic cleavage. Cleavage occurs at the cell surface and is not required for secretion. Cleaved after Gly-149 by the aspartic protease PecA. May also be cleaved before Leu-98 and after Ala-136.

It is found in the cytoplasm. It localises to the secreted. The protein resides in the cell wall. Its subcellular location is the cell surface. It carries out the reaction a triacylglycerol + H2O = a diacylglycerol + a fatty acid + H(+). It catalyses the reaction 1,2,3-tri-(9Z-octadecenoyl)-glycerol + H2O = di-(9Z)-octadecenoylglycerol + (9Z)-octadecenoate + H(+). The catalysed reaction is an acetyl ester + H2O = an aliphatic alcohol + acetate + H(+). The enzyme catalyses a butanoate ester + H2O = an aliphatic alcohol + butanoate + H(+). It carries out the reaction a hexanoate ester + H2O = an aliphatic alcohol + hexanoate + H(+). It catalyses the reaction an octanoate ester + H2O = an aliphatic alcohol + octanoate + H(+). The catalysed reaction is a dodecanoate ester + H2O = an aliphatic alcohol + dodecanoate + H(+). The enzyme catalyses a tetradecanoate ester + H2O = an aliphatic alcohol + tetradecanoate + H(+). It carries out the reaction hexadecanoate ester + H2O = an aliphatic alcohol + hexadecanoate + H(+). It catalyses the reaction octadecanoate ester + H2O = an aliphatic alcohol + octadecanoate + H(+). The catalysed reaction is 1-butyrylglycerol + H2O = butanoate + glycerol + H(+). The enzyme catalyses 1,2,3-tributanoylglycerol + H2O = dibutanoylglycerol + butanoate + H(+). PE domain down-regulates lipase activity. Its activity is regulated as follows. Cleavage by PecA does not affect surface localization and lipase activity. With respect to regulation, inhibited by diethyl-p-nitrophenyl phosphate (E-600) at 0.5 uM, by phenylmethanesulfonyl fluoride at 5 mM and by polyethylene glycol sorbitan monolaurate (Tween 20). Also inhibited by CaCl(2), CoCl(2), MnCl(2), ZnCl(2) and MgCl(2). Inhibited by several hydrazides compounds. Stimulated slightly by SDS at concentrations up to 2 mM, above which the activity is severely inhibited. Catalyzes the hydrolysis of both intracellular and extracellular triacylglycerol (TAG). In vitro, can also hydrolyze p-nitrophenyl (pNP) esters with various chain lengths, including pNP-acetate (C2), pNP-butyrate (C4), pNP-caproate (C6), pNP-caprylate (C8), pNP-laurate (C12), pNP-myristate (C14), pNP-palmitate (C16) and pNP-stearate (C18). Also hydrolyzes monobutyrin, tributyrin and trioctanoin. Overexpression results in increase of virulence characterized by reduced survival of infected mouse and increased burden of bacilli in the lungs. Hydrolyzes internal or host-derived TAG depending on its localization. Functionally, hydrolyzes TAG that accumulates within mycobacterial intracytosolic lipid inclusions (ILI). Probably responsible for the utilization of stored long-chain TAG during the dormancy and reactivation stages of the pathogen. In terms of biological role, hydrolyzes host-derived TAG. The chain is Triacylglycerol lipase from Mycobacterium tuberculosis (strain ATCC 25618 / H37Rv).